The chain runs to 151 residues: Protein SprT-like (151 aa).

Positions 6–147 (LQRMVENLSE…GHCNGKLRMK (142 aa)) constitute a SprT-like domain. A Zn(2+)-binding site is contributed by His-67. Glu-68 is a catalytic residue. Residue His-71 coordinates Zn(2+).

This sequence belongs to the SprT family. It depends on Zn(2+) as a cofactor.

The protein localises to the cytoplasm. The polypeptide is Protein SprT-like (Staphylococcus aureus (strain MRSA252)).